The chain runs to 175 residues: Large ribosomal subunit protein uL10 (175 aa).

The protein belongs to the universal ribosomal protein uL10 family. In terms of assembly, part of the ribosomal stalk of the 50S ribosomal subunit. The N-terminus interacts with L11 and the large rRNA to form the base of the stalk. The C-terminus forms an elongated spine to which L12 dimers bind in a sequential fashion forming a multimeric L10(L12)X complex.

Forms part of the ribosomal stalk, playing a central role in the interaction of the ribosome with GTP-bound translation factors. The chain is Large ribosomal subunit protein uL10 from Cyanothece sp. (strain PCC 7425 / ATCC 29141).